Consider the following 96-residue polypeptide: UPF0184 protein CG14818 (96 aa).

Disordered stretches follow at residues 1-28 and 70-96; these read MSPK…LQEM and IAEE…AAPK. The segment covering 8–21 has biased composition (polar residues); sequence DPSSSGDSGNTNVQ. Positions 21–77 form a coiled coil; it reads QEADLQEMEDVNNSLDALSCALDAVEQRTDDIMSQLRELLNSNREIRRLIAEENDNA. Residues 72–85 are compositionally biased toward acidic residues; that stretch reads EENDNAPESGDDNM.

It belongs to the UPF0184 (EST00098) family.

The sequence is that of UPF0184 protein CG14818 from Drosophila melanogaster (Fruit fly).